Here is a 126-residue protein sequence, read N- to C-terminus: Histone H2B type 1-J (126 aa).

Residues 1 to 12 show a composition bias toward low complexity; the sequence is MPEPAKSAPAPK. Residues 1–35 form a disordered region; that stretch reads MPEPAKSAPAPKKGSKKAVTKAQKKDGKKRKRSRK. Pro2 bears the N-acetylproline mark. Glu3 carries the post-translational modification ADP-ribosyl glutamic acid. An N6-(2-hydroxyisobutyryl)lysine; alternate modification is found at Lys6. Lys6 carries the N6-(beta-hydroxybutyryl)lysine; alternate modification. N6-acetyllysine; alternate is present on Lys6. Lys6 is subject to N6-butyryllysine; alternate. Residue Lys6 is modified to N6-crotonyllysine; alternate. Lys6 carries the N6-lactoyllysine; alternate modification. Lys6 participates in a covalent cross-link: Glycyl lysine isopeptide (Lys-Gly) (interchain with G-Cter in SUMO2); alternate. Position 7 is an ADP-ribosylserine (Ser7). N6-(beta-hydroxybutyryl)lysine; alternate is present on Lys12. An N6-acetyllysine; alternate mark is found at Lys12 and Lys13. N6-crotonyllysine; alternate occurs at positions 12 and 13. Residue Lys12 is modified to N6-lactoyllysine; alternate. Position 13 is an N6-(2-hydroxyisobutyryl)lysine; alternate (Lys13). Ser15 is subject to Phosphoserine; by STK4/MST1. N6-acetyllysine; alternate is present on residues Lys16, Lys17, Lys21, and Lys24. N6-crotonyllysine; alternate occurs at positions 16, 17, 21, and 24. N6-lactoyllysine; alternate occurs at positions 16, 17, 21, and 24. N6-(beta-hydroxybutyryl)lysine; alternate is present on residues Lys17 and Lys21. Lys17 carries the N6-glutaryllysine; alternate modification. 2 positions are modified to N6-(2-hydroxyisobutyryl)lysine; alternate: Lys21 and Lys24. Lys21 bears the N6-butyryllysine; alternate mark. Lys21 is covalently cross-linked (Glycyl lysine isopeptide (Lys-Gly) (interchain with G-Cter in SUMO2); alternate). The residue at position 25 (Lys25) is an N6-(2-hydroxyisobutyryl)lysine. The residue at position 35 (Lys35) is an N6-(2-hydroxyisobutyryl)lysine; alternate. Position 35 is an N6-(beta-hydroxybutyryl)lysine; alternate (Lys35). N6-crotonyllysine; alternate is present on Lys35. Position 35 is an N6-glutaryllysine; alternate (Lys35). Lys35 carries the post-translational modification N6-succinyllysine; alternate. A Glycyl lysine isopeptide (Lys-Gly) (interchain with G-Cter in ubiquitin); alternate cross-link involves residue Lys35. At Glu36 the chain carries PolyADP-ribosyl glutamic acid. Phosphoserine; by AMPK is present on Ser37. N6-(2-hydroxyisobutyryl)lysine; alternate occurs at positions 44, 47, and 58. N6-lactoyllysine; alternate is present on Lys44. Lys44 and Lys47 each carry N6-glutaryllysine; alternate. The residue at position 47 (Lys47) is an N6-methyllysine; alternate. Lys58 is modified (N6,N6-dimethyllysine; alternate). At Arg80 the chain carries Dimethylated arginine. Lys86 is modified (N6-(2-hydroxyisobutyryl)lysine; alternate). Lys86 is modified (N6-(beta-hydroxybutyryl)lysine; alternate). N6-acetyllysine; alternate is present on Lys86. Lys86 bears the N6-lactoyllysine; alternate mark. Lys86 carries the N6,N6,N6-trimethyllysine; alternate modification. Residues Arg87 and Arg93 each carry the omega-N-methylarginine modification. Lys109 carries the post-translational modification N6-(2-hydroxyisobutyryl)lysine; alternate. Lys109 bears the N6-lactoyllysine; alternate mark. Lys109 bears the N6-glutaryllysine; alternate mark. N6-methyllysine; alternate is present on Lys109. An O-linked (GlcNAc) serine glycan is attached at Ser113. Residue Thr116 is modified to Phosphothreonine. Residues Lys117 and Lys121 each carry the N6-(2-hydroxyisobutyryl)lysine; alternate modification. Lys117 and Lys121 each carry N6-(beta-hydroxybutyryl)lysine; alternate. Residues Lys117 and Lys121 each carry the N6-lactoyllysine; alternate modification. 2 positions are modified to N6-glutaryllysine; alternate: Lys117 and Lys121. N6-succinyllysine; alternate occurs at positions 117 and 121. Lys117 carries the post-translational modification N6-malonyllysine; alternate. Lys117 is modified (N6-methylated lysine; alternate). A Glycyl lysine isopeptide (Lys-Gly) (interchain with G-Cter in ubiquitin); alternate cross-link involves residue Lys121.

It belongs to the histone H2B family. As to quaternary structure, the nucleosome is a histone octamer containing two molecules each of H2A, H2B, H3 and H4 assembled in one H3-H4 heterotetramer and two H2A-H2B heterodimers. The octamer wraps approximately 147 bp of DNA. Heterodimer H2BC11 and H2AZ1 interacts with VPS72 (via N-terminal domain). In terms of processing, monoubiquitination at Lys-35 (H2BK34Ub) by the MSL1/MSL2 dimer is required for histone H3 'Lys-4' (H3K4me) and 'Lys-79' (H3K79me) methylation and transcription activation at specific gene loci, such as HOXA9 and MEIS1 loci. Similarly, monoubiquitination at Lys-121 (H2BK120Ub) by the RNF20/40 complex gives a specific tag for epigenetic transcriptional activation and is also prerequisite for histone H3 'Lys-4' and 'Lys-79' methylation. It also functions cooperatively with the FACT dimer to stimulate elongation by RNA polymerase II. H2BK120Ub also acts as a regulator of mRNA splicing: deubiquitination by USP49 is required for efficient cotranscriptional splicing of a large set of exons. Phosphorylation at Ser-37 (H2BS36ph) by AMPK in response to stress promotes transcription. Phosphorylated on Ser-15 (H2BS14ph) by STK4/MST1 during apoptosis; which facilitates apoptotic chromatin condensation. Also phosphorylated on Ser-15 in response to DNA double strand breaks (DSBs), and in correlation with somatic hypermutation and immunoglobulin class-switch recombination. Post-translationally, glcNAcylation at Ser-113 promotes monoubiquitination of Lys-121. It fluctuates in response to extracellular glucose, and associates with transcribed genes. In terms of processing, ADP-ribosylated by PARP1 or PARP2 on Ser-7 (H2BS6ADPr) in response to DNA damage. H2BS6ADPr promotes recruitment of CHD1L. Mono-ADP-ribosylated on Glu-3 (H2BE2ADPr) by PARP3 in response to single-strand breaks. Poly ADP-ribosylation on Glu-36 (H2BE35ADPr) by PARP1 regulates adipogenesis: it inhibits phosphorylation at Ser-37 (H2BS36ph), thereby blocking expression of pro-adipogenetic genes. Crotonylation (Kcr) is specifically present in male germ cells and marks testis-specific genes in post-meiotic cells, including X-linked genes that escape sex chromosome inactivation in haploid cells. Crotonylation marks active promoters and enhancers and confers resistance to transcriptional repressors. It is also associated with post-meiotically activated genes on autosomes. Post-translationally, lactylated in macrophages by EP300/P300 by using lactoyl-CoA directly derived from endogenous or exogenous lactate, leading to stimulates gene transcription.

It is found in the nucleus. The protein localises to the chromosome. Core component of nucleosome. Nucleosomes wrap and compact DNA into chromatin, limiting DNA accessibility to the cellular machineries which require DNA as a template. Histones thereby play a central role in transcription regulation, DNA repair, DNA replication and chromosomal stability. DNA accessibility is regulated via a complex set of post-translational modifications of histones, also called histone code, and nucleosome remodeling. Its function is as follows. Has broad antibacterial activity. May contribute to the formation of the functional antimicrobial barrier of the colonic epithelium, and to the bactericidal activity of amniotic fluid. This Homo sapiens (Human) protein is Histone H2B type 1-J.